A 341-amino-acid polypeptide reads, in one-letter code: Thromboxane A2 receptor (341 aa).

The Extracellular segment spans residues 1-29 (MWLNSTSLGACFRPVNITLQERRAIASPW). N-linked (GlcNAc...) asparagine glycosylation is found at asparagine 4 and asparagine 16. Residues 30 to 52 (FAASFCALGLGSNLLALSVLAGA) form a helical membrane-spanning segment. The Cytoplasmic segment spans residues 53–65 (RPGAGPRSSFLAL). The chain crosses the membrane as a helical span at residues 66–86 (LCGLVLTDFLGLLVTGAVVAS). The Extracellular segment spans residues 87–105 (QHAALLDWRATDPGCRLCH). A disulfide bridge links cysteine 104 with cysteine 181. A helical membrane pass occupies residues 106-127 (FMGAAMVFFGLCPLLLGAAMAA). The Cytoplasmic portion of the chain corresponds to 128–147 (ERFVGITRPFSRPAATSRRA). A helical membrane pass occupies residues 148 to 170 (WATVGLVWVGAGTLGLLPLLGLG). Residues 171–191 (RYSVQYPGSWCFLTLGAERGD) lie on the Extracellular side of the membrane. The chain crosses the membrane as a helical span at residues 192–217 (VAFGLMFALLGSVSVGLSLLLNTVSV). The Cytoplasmic segment spans residues 218-244 (ATLCRVYHAREATQRPRDCEVEMMVQL). A helical transmembrane segment spans residues 245-268 (VGIMVVATVCWMPLLVFILQTLLQ). The Extracellular portion of the chain corresponds to 269–287 (TLPVMSPSGQLLRTTERQL). A helical transmembrane segment spans residues 288 to 309 (LIYLRVATWNQILDPWVYILFR). The Cytoplasmic portion of the chain corresponds to 310–341 (RSVLRRLHPRFTSQLQAVSLHSPPTQAMLSGP). A Phosphoserine modification is found at serine 328.

This sequence belongs to the G-protein coupled receptor 1 family. Interacts with RPGRIP1L. Interacts with RACK1; the interaction regulates TBXA2R cell surface expression. In the brain, expressed in all types of glial cells. In the kidney, expressed in the mesangial cells of the glomerulus, smooth muscle cells of the renal arterioles, and in transitional cell epithelium of renal pelvis.

The protein localises to the cell membrane. Its function is as follows. Receptor for thromboxane A2 (TXA2), a potent stimulator of platelet aggregation. The activity of this receptor is mediated by a G-protein that activates a phosphatidylinositol-calcium second messenger system. In the kidney, the binding of TXA2 to glomerular TP receptors causes intense vasoconstriction. Activates phospholipase C and adenylyl cyclase. This Rattus norvegicus (Rat) protein is Thromboxane A2 receptor (Tbxa2r).